A 328-amino-acid chain; its full sequence is Lipoyl synthase (328 aa).

[4Fe-4S] cluster contacts are provided by C75, C80, C86, C101, C105, C108, and S315. One can recognise a Radical SAM core domain in the interval 87-304 (FNHGTATFMI…EREAKKMGYE (218 aa)).

Belongs to the radical SAM superfamily. Lipoyl synthase family. It depends on [4Fe-4S] cluster as a cofactor.

Its subcellular location is the cytoplasm. The catalysed reaction is [[Fe-S] cluster scaffold protein carrying a second [4Fe-4S](2+) cluster] + N(6)-octanoyl-L-lysyl-[protein] + 2 oxidized [2Fe-2S]-[ferredoxin] + 2 S-adenosyl-L-methionine + 4 H(+) = [[Fe-S] cluster scaffold protein] + N(6)-[(R)-dihydrolipoyl]-L-lysyl-[protein] + 4 Fe(3+) + 2 hydrogen sulfide + 2 5'-deoxyadenosine + 2 L-methionine + 2 reduced [2Fe-2S]-[ferredoxin]. Its pathway is protein modification; protein lipoylation via endogenous pathway; protein N(6)-(lipoyl)lysine from octanoyl-[acyl-carrier-protein]: step 2/2. Catalyzes the radical-mediated insertion of two sulfur atoms into the C-6 and C-8 positions of the octanoyl moiety bound to the lipoyl domains of lipoate-dependent enzymes, thereby converting the octanoylated domains into lipoylated derivatives. The protein is Lipoyl synthase of Colwellia psychrerythraea (strain 34H / ATCC BAA-681) (Vibrio psychroerythus).